The following is a 188-amino-acid chain: Elongation factor P (188 aa).

Lysine 34 is subject to N6-(3,6-diaminohexanoyl)-5-hydroxylysine.

The protein belongs to the elongation factor P family. In terms of processing, may be beta-lysylated on the epsilon-amino group of Lys-34 by the combined action of EpmA and EpmB, and then hydroxylated on the C5 position of the same residue by EpmC (if this protein is present). Lysylation is critical for the stimulatory effect of EF-P on peptide-bond formation. The lysylation moiety may extend toward the peptidyltransferase center and stabilize the terminal 3-CCA end of the tRNA. Hydroxylation of the C5 position on Lys-34 may allow additional potential stabilizing hydrogen-bond interactions with the P-tRNA.

It is found in the cytoplasm. It functions in the pathway protein biosynthesis; polypeptide chain elongation. Functionally, involved in peptide bond synthesis. Alleviates ribosome stalling that occurs when 3 or more consecutive Pro residues or the sequence PPG is present in a protein, possibly by augmenting the peptidyl transferase activity of the ribosome. Modification of Lys-34 is required for alleviation. This chain is Elongation factor P, found in Vibrio atlanticus (strain LGP32) (Vibrio splendidus (strain Mel32)).